We begin with the raw amino-acid sequence, 416 residues long: Zinc finger protein 92 homolog (416 aa).

Residues 14-85 enclose the KRAB domain; the sequence is VSFEDVSVYF…DIPRTWATAG (72 aa). Residues 86 to 125 are disordered; sequence LHIGDRTQSKTSTSTQKHSGRQLPGADPQGGKEGQAARSS. 8 C2H2-type zinc fingers span residues 152 to 174, 180 to 202, 208 to 230, 236 to 258, 264 to 286, 292 to 314, 320 to 342, and 348 to 370; these read YLCQ…RIIH, YACP…QRIH, YACP…QVIH, FACG…ARVH, YACP…QRTH, YACG…QRSH, FACR…RRVH, and YECS…QAVH. The segment at 368 to 416 is disordered; sequence AVHGARRPAKAETARRLAGPGSTGPGSAVAATSPPRPSTAARPSRPSRR. The span at 394-416 shows a compositional bias: low complexity; sequence SAVAATSPPRPSTAARPSRPSRR.

Belongs to the krueppel C2H2-type zinc-finger protein family.

It localises to the nucleus. In terms of biological role, KRAB domain-containing zinc-finger protein that represses B1/Alu SINE transposable elements and modulates the transcription of nearby genes in a tissue-specific manner. It regulates glucose homeostasis and lipid metabolism by modulating the expression of the endocrine cell-defining transcription factor, MAFB, in pancreatic islets and, the fat metabolism regulator, ACACB, in adipose tissue and muscle. This Homo sapiens (Human) protein is Zinc finger protein 92 homolog (ZFP92).